A 330-amino-acid polypeptide reads, in one-letter code: Elongation factor Ts (330 aa).

Residues 79–82 (TDFV) are involved in Mg(2+) ion dislocation from EF-Tu.

It belongs to the EF-Ts family.

The protein resides in the cytoplasm. Its function is as follows. Associates with the EF-Tu.GDP complex and induces the exchange of GDP to GTP. It remains bound to the aminoacyl-tRNA.EF-Tu.GTP complex up to the GTP hydrolysis stage on the ribosome. This Bacteroides fragilis (strain ATCC 25285 / DSM 2151 / CCUG 4856 / JCM 11019 / LMG 10263 / NCTC 9343 / Onslow / VPI 2553 / EN-2) protein is Elongation factor Ts.